The primary structure comprises 200 residues: Charged multivesicular body protein 6 (200 aa).

Gly-2 carries the N-myristoyl glycine lipid modification. Positions 10 to 145 (QSRVTEQDRA…YQRQIDELLA (136 aa)) form a coiled coil. Ser-119 carries the post-translational modification Phosphoserine. Residue Thr-130 is modified to Phosphothreonine. The Type-2 MIT-interacting motif motif lies at 168–179 (MELPEVPSEPLP). The segment at 168–200 (MELPEVPSEPLPDRNPEAPAKARSRQAELVAAS) is disordered.

The protein belongs to the SNF7 family. Probable core component of the endosomal sorting required for transport complex III (ESCRT-III). ESCRT-III components are thought to multimerize to form a flat lattice on the perimeter membrane of the endosome. Several assembly forms of ESCRT-III may exist that interact and act sequentially. Interacts with VPS4A; the interaction is direct. Interacts with VPS4B; the interaction is direct. Interacts with CHMP4A, CHMP4B and CHMP4C. Interacts with SNF8, VPS25 and VPS36. ISGylated in a CHMP5-dependent manner. Isgylation weakens its interaction with VPS4A.

It is found in the endomembrane system. The protein resides in the endosome membrane. It localises to the late endosome membrane. The protein localises to the membrane. In terms of biological role, probable core component of the endosomal sorting required for transport complex III (ESCRT-III) which is involved in multivesicular bodies (MVBs) formation and sorting of endosomal cargo proteins into MVBs. MVBs contain intraluminal vesicles (ILVs) that are generated by invagination and scission from the limiting membrane of the endosome and mostly are delivered to lysosomes enabling degradation of membrane proteins, such as stimulated growth factor receptors, lysosomal enzymes and lipids. The MVB pathway appears to require the sequential function of ESCRT-O, -I,-II and -III complexes. ESCRT-III proteins mostly dissociate from the invaginating membrane before the ILV is released. The ESCRT machinery also functions in topologically equivalent membrane fission events, such as the terminal stages of cytokinesis. ESCRT-III proteins are believed to mediate the necessary vesicle extrusion and/or membrane fission activities, possibly in conjunction with the AAA ATPase VPS4. In the ESCRT-III complex, it probably serves as an acceptor for the ESCRT-II complex on endosomal membranes. This Mus musculus (Mouse) protein is Charged multivesicular body protein 6 (Chmp6).